The chain runs to 729 residues: Translation initiation factor IF-2 (729 aa).

A disordered region spans residues glutamine 20 to proline 141. The span at alanine 22–glycine 91 shows a compositional bias: gly residues. Residues glycine 92–arginine 108 show a composition bias toward basic and acidic residues. A compositionally biased stretch (low complexity) spans serine 112–glycine 127. In terms of domain architecture, tr-type G spans proline 229–glutamate 396. A G1 region spans residues glycine 238 to threonine 245. A GTP-binding site is contributed by glycine 238 to threonine 245. Residues glycine 263–histidine 267 are G2. A G3 region spans residues aspartate 284–glycine 287. Residues aspartate 284–histidine 288 and asparagine 338–aspartate 341 each bind GTP. A G4 region spans residues asparagine 338–aspartate 341. The segment at serine 374–lysine 376 is G5.

This sequence belongs to the TRAFAC class translation factor GTPase superfamily. Classic translation factor GTPase family. IF-2 subfamily.

The protein localises to the cytoplasm. One of the essential components for the initiation of protein synthesis. Protects formylmethionyl-tRNA from spontaneous hydrolysis and promotes its binding to the 30S ribosomal subunits. Also involved in the hydrolysis of GTP during the formation of the 70S ribosomal complex. The sequence is that of Translation initiation factor IF-2 from Roseiflexus sp. (strain RS-1).